Reading from the N-terminus, the 298-residue chain is Lipoyl synthase (298 aa).

7 residues coordinate [4Fe-4S] cluster: Cys40, Cys45, Cys51, Cys67, Cys71, Cys74, and Ser280. A Radical SAM core domain is found at 53 to 269 (AVRKTATFMI…KEIALSKGFS (217 aa)).

It belongs to the radical SAM superfamily. Lipoyl synthase family. It depends on [4Fe-4S] cluster as a cofactor.

It localises to the cytoplasm. It carries out the reaction [[Fe-S] cluster scaffold protein carrying a second [4Fe-4S](2+) cluster] + N(6)-octanoyl-L-lysyl-[protein] + 2 oxidized [2Fe-2S]-[ferredoxin] + 2 S-adenosyl-L-methionine + 4 H(+) = [[Fe-S] cluster scaffold protein] + N(6)-[(R)-dihydrolipoyl]-L-lysyl-[protein] + 4 Fe(3+) + 2 hydrogen sulfide + 2 5'-deoxyadenosine + 2 L-methionine + 2 reduced [2Fe-2S]-[ferredoxin]. It participates in protein modification; protein lipoylation via endogenous pathway; protein N(6)-(lipoyl)lysine from octanoyl-[acyl-carrier-protein]. Catalyzes the radical-mediated insertion of two sulfur atoms into the C-6 and C-8 positions of the octanoyl moiety bound to the lipoyl domains of lipoate-dependent enzymes, thereby converting the octanoylated domains into lipoylated derivatives. In Bacillus cereus (strain B4264), this protein is Lipoyl synthase.